Here is a 272-residue protein sequence, read N- to C-terminus: Undecaprenyl-diphosphatase (272 aa).

Transmembrane regions (helical) follow at residues 22 to 42, 45 to 65, 92 to 112, 118 to 138, 189 to 209, 228 to 248, and 251 to 271; these read FLPVSSTGHMIIVGHMLGFTG, AETFEVIIQLGSILAVVVVFW, SHIILAMLPAVTLGLMFHDVI, PQSVMYALVIGGVLLITAEIL, YTASEFSFILAVPMMMGASGL, VGFVTAFVVALVAIKTFLALI, and ISFIPFAIYRFIVAAAVYWVF.

Belongs to the UppP family.

It is found in the cell inner membrane. The catalysed reaction is di-trans,octa-cis-undecaprenyl diphosphate + H2O = di-trans,octa-cis-undecaprenyl phosphate + phosphate + H(+). Catalyzes the dephosphorylation of undecaprenyl diphosphate (UPP). Confers resistance to bacitracin. The protein is Undecaprenyl-diphosphatase of Photorhabdus laumondii subsp. laumondii (strain DSM 15139 / CIP 105565 / TT01) (Photorhabdus luminescens subsp. laumondii).